Here is a 183-residue protein sequence, read N- to C-terminus: MSQPAKVLLLYAHPESQDSVANRVLLKPAIQHNNVTVHDLYARYPDFFIDTPYEQALLREHDVIVFQHPLYTYSCPALLKEWLDRVLSRGFASGPGGNQLVGKYWRSVITTGEPESAYRYDALNRYPMSDVLRPFELTAAMCRMHWMPPIIVYWARRHSPQTLASHAKAYGEWLANPVSAGGY.

It belongs to the NAD(P)H dehydrogenase (quinone) family. KefG subfamily. In terms of assembly, interacts with KefB.

It localises to the cell inner membrane. It catalyses the reaction a quinone + NADH + H(+) = a quinol + NAD(+). It carries out the reaction a quinone + NADPH + H(+) = a quinol + NADP(+). Functionally, regulatory subunit of a potassium efflux system that confers protection against electrophiles. Required for full activity of KefB. The chain is Glutathione-regulated potassium-efflux system ancillary protein KefG from Salmonella paratyphi C (strain RKS4594).